Here is a 463-residue protein sequence, read N- to C-terminus: Probable multidrug resistance protein YoeA (463 aa).

12 helical membrane-spanning segments follow: residues 24 to 44 (LFLV…LVGM), 56 to 76 (VAAV…TIGI), 106 to 126 (FTFL…LDIL), 143 to 163 (ARIL…TTFL), 177 to 197 (IVST…MFGF), 202 to 222 (IYGS…VLMV), 256 to 276 (VPAS…ISFV), 293 to 313 (VASY…IFAA), 330 to 350 (VGIW…YVFS), 370 to 390 (LLMI…ISAT), 397 to 417 (VLWP…PVAF), and 427 to 447 (ILGV…LIYG).

It belongs to the multi antimicrobial extrusion (MATE) (TC 2.A.66.1) family.

Its subcellular location is the cell membrane. This is Probable multidrug resistance protein YoeA (yoeA) from Bacillus subtilis (strain 168).